A 1047-amino-acid polypeptide reads, in one-letter code: UPF0182 protein Mlut_14990 (1047 aa).

Composition is skewed to gly residues over residues 1 to 27 (MSFGQGGGGPFGGPPRDGGGTAGGQSG) and 49 to 59 (GPGGPFGGGGS). A disordered region spans residues 1–66 (MSFGQGGGGP…GGSSAARGRG (66 aa)). The next 7 membrane-spanning stretches (helical) occupy residues 71–91 (PSALVLTIIAVAVLVGLFVVF), 114–134 (VLAKGALFLIAGLGMALAVWL), 168–188 (LVFLGVPLVLGVFAGSTAMNG), 214–234 (FFMATLPFLTLVVGYLISVVL), 266–286 (AHIGITLAVFLLLQGVNFWLN), 314–334 (AILAVTAVIVAGLFVWTVVSG), and 341–361 (IGTAVLVITALVVGTAYPFIV). Disordered regions lie at residues 544 to 568 (GAPAVERDRPQTADSQEDTAYTFSG), 941 to 965 (GDSGAVTPEEKQAEAPAPGEKPTAP), and 1007 to 1047 (EALK…TPSG). Positions 555 to 565 (TADSQEDTAYT) are enriched in polar residues. Residues 1015–1037 (ADDALGGDAPAQEQAPAEASPAP) show a composition bias toward low complexity. The span at 1038-1047 (SSSPSPTPSG) shows a compositional bias: pro residues.

The protein belongs to the UPF0182 family.

The protein resides in the cell membrane. The sequence is that of UPF0182 protein Mlut_14990 from Micrococcus luteus (strain ATCC 4698 / DSM 20030 / JCM 1464 / CCM 169 / CCUG 5858 / IAM 1056 / NBRC 3333 / NCIMB 9278 / NCTC 2665 / VKM Ac-2230) (Micrococcus lysodeikticus).